Reading from the N-terminus, the 344-residue chain is Ubiquitin-associated domain-containing protein 2 (344 aa).

The signal sequence occupies residues Met1–Phe34. At Gln35–Lys91 the chain is on the extracellular side. A helical transmembrane segment spans residues Phe92–Val111. Residues Glu112–Asn123 lie on the Cytoplasmic side of the membrane. A helical membrane pass occupies residues Ser124–Cys142. At Ser143–Thr162 the chain is on the extracellular side. N-linked (GlcNAc...) asparagine glycosylation occurs at Asn160. The chain crosses the membrane as a helical span at residues Leu163–Leu183. The Cytoplasmic portion of the chain corresponds to Ser184–His344. Residues Arg284–Glu307 are disordered. Residues Asn286–Asp296 are compositionally biased toward basic and acidic residues. In terms of domain architecture, UBA spans Glu304–His344.

The protein localises to the endoplasmic reticulum membrane. In terms of biological role, restricts trafficking of FAF2 from the endoplasmic reticulum to lipid droplets. May negatively regulate the canonical Wnt signaling pathway in the lymphocytes. This Gallus gallus (Chicken) protein is Ubiquitin-associated domain-containing protein 2 (UBAC2).